The primary structure comprises 437 residues: Trigger factor (437 aa).

A PPIase FKBP-type domain is found at glycine 174 to proline 260.

It belongs to the FKBP-type PPIase family. Tig subfamily.

It localises to the cytoplasm. It catalyses the reaction [protein]-peptidylproline (omega=180) = [protein]-peptidylproline (omega=0). Involved in protein export. Acts as a chaperone by maintaining the newly synthesized protein in an open conformation. Functions as a peptidyl-prolyl cis-trans isomerase. This is Trigger factor from Koribacter versatilis (strain Ellin345).